The following is a 378-amino-acid chain: Succinyl-diaminopimelate desuccinylase 2 (378 aa).

H68 contacts Zn(2+). The active site involves D70. D101 lines the Zn(2+) pocket. Catalysis depends on E135, which acts as the Proton acceptor. E136, E164, and H350 together coordinate Zn(2+).

This sequence belongs to the peptidase M20A family. DapE subfamily. In terms of assembly, homodimer. The cofactor is Zn(2+). Co(2+) serves as cofactor.

The enzyme catalyses N-succinyl-(2S,6S)-2,6-diaminopimelate + H2O = (2S,6S)-2,6-diaminopimelate + succinate. It participates in amino-acid biosynthesis; L-lysine biosynthesis via DAP pathway; LL-2,6-diaminopimelate from (S)-tetrahydrodipicolinate (succinylase route): step 3/3. Catalyzes the hydrolysis of N-succinyl-L,L-diaminopimelic acid (SDAP), forming succinate and LL-2,6-diaminopimelate (DAP), an intermediate involved in the bacterial biosynthesis of lysine and meso-diaminopimelic acid, an essential component of bacterial cell walls. This is Succinyl-diaminopimelate desuccinylase 2 from Alteromonas mediterranea (strain DSM 17117 / CIP 110805 / LMG 28347 / Deep ecotype).